A 107-amino-acid polypeptide reads, in one-letter code: Thioredoxin (107 aa).

Positions 2 to 107 (VVHIENLNAF…TLKQKINDHK (106 aa)) constitute a Thioredoxin domain. Residues cysteine 32 and cysteine 35 each act as nucleophile in the active site. Cysteine 32 and cysteine 35 are disulfide-bonded. An S-nitrosocysteine mark is found at cysteine 71 and cysteine 75.

The protein belongs to the thioredoxin family. In terms of processing, may be nitrosylated on several cysteine residues, depending on the oxidation state. Nitrosylated Cys-75 may serve as donor for nitrosylation of target proteins.

The protein localises to the nucleus. Its subcellular location is the cytoplasm. The protein resides in the secreted. Participates in various redox reactions through the reversible oxidation of its active center dithiol to a disulfide and catalyzes dithiol-disulfide exchange reactions. Plays a role in the reversible S-nitrosylation of cysteine residues in target proteins, and thereby contributes to the response to intracellular nitric oxide. Nitrosylates the active site Cys of CASP3 in response to nitric oxide (NO), and thereby inhibits caspase-3 activity. Induces the FOS/JUN AP-1 DNA binding activity in ionizing radiation (IR) cells through its oxidation/reduction status and stimulates AP-1 transcriptional activity. This Ictalurus punctatus (Channel catfish) protein is Thioredoxin (txn).